Here is a 481-residue protein sequence, read N- to C-terminus: Proline--tRNA ligase (481 aa).

Belongs to the class-II aminoacyl-tRNA synthetase family. ProS type 3 subfamily. In terms of assembly, homodimer.

It localises to the cytoplasm. The enzyme catalyses tRNA(Pro) + L-proline + ATP = L-prolyl-tRNA(Pro) + AMP + diphosphate. In terms of biological role, catalyzes the attachment of proline to tRNA(Pro) in a two-step reaction: proline is first activated by ATP to form Pro-AMP and then transferred to the acceptor end of tRNA(Pro). This chain is Proline--tRNA ligase, found in Chlorobium phaeobacteroides (strain BS1).